The following is a 185-amino-acid chain: MELVVQSRETDKKSVIKKIRQQGGIPAVLYSGGKSLANVVIDARVFNKFLSTLESGALASTVFTLSYEGREIKALVKDIQYHVTTYDVIHLDFEELVEDREVRLNIPIRCINTVDCVGVKLGGSLRQVIRYMRVVCKPKDIVPFLELDVQSLGLSQTLKLSDIRIPEGIKPVTPLKEVAVTVARR.

This sequence belongs to the bacterial ribosomal protein bL25 family. CTC subfamily. Part of the 50S ribosomal subunit; part of the 5S rRNA/L5/L18/L25 subcomplex. Contacts the 5S rRNA. Binds to the 5S rRNA independently of L5 and L18.

Its function is as follows. This is one of the proteins that binds to the 5S RNA in the ribosome where it forms part of the central protuberance. The chain is Large ribosomal subunit protein bL25 from Chlamydia muridarum (strain MoPn / Nigg).